Consider the following 713-residue polypeptide: Protein-glucosylgalactosylhydroxylysine glucosidase (713 aa).

A signal peptide spans M1–A21. N-linked (GlcNAc...) asparagine glycans are attached at residues N104, N160, N171, N186, and N283. Position 317-318 (W317–D318) interacts with substrate. Residue N361 is glycosylated (N-linked (GlcNAc...) asparagine). E451 serves as the catalytic Proton donor. N-linked (GlcNAc...) asparagine glycosylation is found at N457 and N481. K521 to Q522 lines the substrate pocket. N-linked (GlcNAc...) asparagine glycans are attached at residues N535, N576, and N662.

It belongs to the glycosyl hydrolase 65 family.

The protein resides in the secreted. It carries out the reaction (5R)-5-O-[alpha-D-glucosyl-(1-&gt;2)-beta-D-galactosyl]-5-hydroxy-L-lysyl-[collagen] + H2O = (5R)-5-O-(beta-D-galactosyl)-5-hydroxy-L-lysyl-[collagen] + D-glucose. Its function is as follows. Catalyzes the hydrolysis of glucose from the disaccharide unit linked to hydroxylysine residues of collagen and collagen-like proteins. The protein is Protein-glucosylgalactosylhydroxylysine glucosidase of Dictyostelium discoideum (Social amoeba).